We begin with the raw amino-acid sequence, 232 residues long: Oxidoreductase 1 (232 aa).

This sequence belongs to the MQO family. It depends on FAD as a cofactor.

In terms of biological role, oxidoreductase; part of the gene cluster that mediates the biosynthesis of elsinochromes, pigments consisting of at least four interconvertible tautomers (A, B, C and D) that have a core phenolic quinone to which various side chains are attached and which play an important role in fungal pathogenesis. The non-reducing polyketide synthase PKS1 was proposed to iteratively catalyze decarboxylation between acetyl-CoA and malonyl-CoA subunits for polyketide chain elongation. The released polyketide undergoes cyclization to form an aromatic ring, and proceeds via serial modification steps to produce the heptaketide back- bone of elsinochrome. As elsinochrome has a symmetrical structure, two identical heptaketides are fused to form a core 1,2-dihydrobenzo-perylene ring structure, which can then be successively modified to produce the various derivatives of elsinochrome. Some of these reactions may be cooperatively carried out, at least in part, by the products of RDT1, OXR1 and PKS1. PRF1, embedded within the elsinochrome cluster possibly functions to stabilize some of the biosynthetic enzymes required for elsinochrome production. As prefoldin is a hexamer containing 2 a and 4 b subunits, additional prefoldin subunits, whose coding genes may not immediately link to the elsinochrome biosynthetic gene cluster, are required to fulfill the chaperone function. In addition, no methyltransferase-coding gene exists within the biosynthetic gene cluster, even though elsinochrome has four methyl groups at positions C3, C7, C8 and C12. Apparently, the identified gene cluster does not contain the entire entourage of genes responsible for elsinochrome biosynthesis. Once elsinochrome is synthesized, it must be exported outside the fungal cells, which is probably accomplished by the ECT1 transporter, to avoid toxicity. This is Oxidoreductase 1 from Elsinoe fawcettii (Citrus scab fungus).